Reading from the N-terminus, the 100-residue chain is Small ribosomal subunit protein uS14c (100 aa).

The protein belongs to the universal ribosomal protein uS14 family. Part of the 30S ribosomal subunit.

The protein resides in the plastid. The protein localises to the chloroplast. Binds 16S rRNA, required for the assembly of 30S particles. The sequence is that of Small ribosomal subunit protein uS14c from Olimarabidopsis pumila (Dwarf rocket).